We begin with the raw amino-acid sequence, 266 residues long: Indole-3-glycerol phosphate synthase (266 aa).

It belongs to the TrpC family.

The enzyme catalyses 1-(2-carboxyphenylamino)-1-deoxy-D-ribulose 5-phosphate + H(+) = (1S,2R)-1-C-(indol-3-yl)glycerol 3-phosphate + CO2 + H2O. It functions in the pathway amino-acid biosynthesis; L-tryptophan biosynthesis; L-tryptophan from chorismate: step 4/5. This chain is Indole-3-glycerol phosphate synthase, found in Variovorax paradoxus (strain S110).